The primary structure comprises 143 residues: uncharacterized protein (143 aa).

Belongs to the SufE family.

This is an uncharacterized protein from Mycobacterium tuberculosis (strain CDC 1551 / Oshkosh).